Reading from the N-terminus, the 280-residue chain is Putative sugar uptake protein (280 aa).

The next 10 helical transmembrane spans lie at 4–21 (LIAL…LIAG), 33–52 (MGLG…IHPA), 56–78 (ITIF…GQFI), 91–113 (LSTG…EWTS), 117–136 (YLIG…LTAI), 149–166 (IILL…SSFP), 176–195 (LFLP…LLVS), 207–229 (WLNI…SAQL), 233–255 (ITAF…FFIG), and 262–279 (ELIA…GAAI).

This sequence belongs to the GRP transporter (TC 2.A.7.5) family.

It localises to the cell membrane. The chain is Putative sugar uptake protein from Lactobacillus helveticus (Lactobacillus suntoryeus).